Here is a 563-residue protein sequence, read N- to C-terminus: Putative inactive polypeptide N-acetylgalactosaminyltransferase 12 (563 aa).

Residues 1 to 6 (MEVFAS) are Cytoplasmic-facing. A helical; Signal-anchor for type II membrane protein transmembrane segment spans residues 7-29 (VLNCCFKYIVLPVWIFIVLLLLH). Over 30–563 (RDLSSWDGLM…SVMQSANILV (534 aa)) the chain is Lumenal. Asparagine 50 carries an N-linked (GlcNAc...) asparagine glycan. An intrachain disulfide couples cysteine 97 to cysteine 334. Positions 109-225 (MKPASIIMIF…NGWLSPLLDT (117 aa)) are catalytic subdomain A. A catalytic subdomain B region spans residues 280 to 342 (PYEVAAVRTS…PCSRVGHLQP (63 aa)). N-linked (GlcNAc...) asparagine glycosylation is found at asparagine 389 and asparagine 428. In terms of domain architecture, Ricin B-type lectin spans 433–549 (ASGHVKTLEF…ANGKQRWILD (117 aa)). A disulfide bond links cysteine 446 and cysteine 461. Asparagine 464 and asparagine 469 each carry an N-linked (GlcNAc...) asparagine glycan. Intrachain disulfides connect cysteine 485–cysteine 499 and cysteine 523–cysteine 537. Asparagine 552 is a glycosylation site (N-linked (GlcNAc...) asparagine).

This sequence belongs to the glycosyltransferase 2 family. GalNAc-T subfamily.

The protein localises to the golgi apparatus membrane. Its function is as follows. Probable inactive glycosyltransferase. The protein is Putative inactive polypeptide N-acetylgalactosaminyltransferase 12 (pgant12) of Drosophila melanogaster (Fruit fly).